We begin with the raw amino-acid sequence, 311 residues long: Mas-related G-protein coupled receptor member E (311 aa).

Residues 1 to 25 (MEPREAGQHAGAADGAQEDVAFNLV) are Extracellular-facing. The helical transmembrane segment at 26 to 46 (ILSLTEGLGLGGLLGNGAVLW) threads the bilayer. Topologically, residues 47–63 (LLSSNVYRNPFAIYLLD) are cytoplasmic. A helical transmembrane segment spans residues 64-84 (VACADLIFLGCHMVAIIPDLL). Topologically, residues 85–95 (QGRLDFPGFVQ) are extracellular. The chain crosses the membrane as a helical span at residues 96–116 (TSLATLRFFCYIVGLSLLVAV). Topologically, residues 117–136 (SVEQCLAALFPAWYSCRRPR) are cytoplasmic. Residues 137-157 (HLTTCVCALTWACCLLLHLLL) traverse the membrane as a helical segment. Over 158–177 (SGACTQFFGEPSRHLCRTLW) the chain is Extracellular. A helical membrane pass occupies residues 178–198 (LVAAVLLAVLCCTMCGASLML). At 199 to 216 (LLQVERGPQRPPPRGFPT) the chain is on the cytoplasmic side. A helical membrane pass occupies residues 217-237 (LILLAVLLFLFCGLPFGIYWL). The Extracellular portion of the chain corresponds to 238–251 (SRNLLWHIPHYFYH). The helical transmembrane segment at 252 to 272 (FSFLTAAVYCAAKPVVYFCLG) threads the bilayer. The Cytoplasmic segment spans residues 273–311 (SAQGRRLPLRLVLQRALGDEAELGAVRETSRRGLVDIAA).

It belongs to the G-protein coupled receptor 1 family. Mas subfamily.

Its subcellular location is the cell membrane. Orphan receptor. May regulate nociceptor function and/or development, including the sensation or modulation of pain. This Macaca fascicularis (Crab-eating macaque) protein is Mas-related G-protein coupled receptor member E (MRGPRE).